The following is a 130-amino-acid chain: Glycine cleavage system H protein (130 aa).

In terms of domain architecture, Lipoyl-binding spans 24–106 (EYTVGITEHA…YHEGWLFRIK (83 aa)). K65 is modified (N6-lipoyllysine).

Belongs to the GcvH family. As to quaternary structure, the glycine cleavage system is composed of four proteins: P, T, L and H. Requires (R)-lipoate as cofactor.

Its function is as follows. The glycine cleavage system catalyzes the degradation of glycine. The H protein shuttles the methylamine group of glycine from the P protein to the T protein. In Photorhabdus laumondii subsp. laumondii (strain DSM 15139 / CIP 105565 / TT01) (Photorhabdus luminescens subsp. laumondii), this protein is Glycine cleavage system H protein.